The following is a 244-amino-acid chain: Protein DCG1 (244 aa).

Belongs to the HyuE racemase family.

This Saccharomyces cerevisiae (strain ATCC 204508 / S288c) (Baker's yeast) protein is Protein DCG1 (DCG1).